Here is a 263-residue protein sequence, read N- to C-terminus: 2-dehydro-3-deoxyphosphooctonate aldolase (263 aa).

Belongs to the KdsA family.

The protein resides in the cytoplasm. It catalyses the reaction D-arabinose 5-phosphate + phosphoenolpyruvate + H2O = 3-deoxy-alpha-D-manno-2-octulosonate-8-phosphate + phosphate. It participates in carbohydrate biosynthesis; 3-deoxy-D-manno-octulosonate biosynthesis; 3-deoxy-D-manno-octulosonate from D-ribulose 5-phosphate: step 2/3. It functions in the pathway bacterial outer membrane biogenesis; lipopolysaccharide biosynthesis. In Wolinella succinogenes (strain ATCC 29543 / DSM 1740 / CCUG 13145 / JCM 31913 / LMG 7466 / NCTC 11488 / FDC 602W) (Vibrio succinogenes), this protein is 2-dehydro-3-deoxyphosphooctonate aldolase.